The chain runs to 534 residues: CTP synthase (534 aa).

The tract at residues 1–266 (MKQKFIFVTG…DELIVARLGL (266 aa)) is amidoligase domain. Ser14 lines the CTP pocket. Ser14 contacts UTP. Residues 15-20 (SIGKGL) and Asp72 each bind ATP. Asp72 and Glu140 together coordinate Mg(2+). CTP-binding positions include 147 to 149 (DIE), 187 to 192 (KSKPTQ), and Lys223. Residues 187–192 (KSKPTQ) and Lys223 contribute to the UTP site. In terms of domain architecture, Glutamine amidotransferase type-1 spans 291 to 534 (KIGVVGKYVD…HFVKASLKKK (244 aa)). Gly353 serves as a coordination point for L-glutamine. Cys380 acts as the Nucleophile; for glutamine hydrolysis in catalysis. L-glutamine is bound by residues 381 to 384 (FGMQ), Glu404, and Arg464. Catalysis depends on residues His509 and Glu511.

The protein belongs to the CTP synthase family. As to quaternary structure, homotetramer.

It carries out the reaction UTP + L-glutamine + ATP + H2O = CTP + L-glutamate + ADP + phosphate + 2 H(+). The catalysed reaction is L-glutamine + H2O = L-glutamate + NH4(+). The enzyme catalyses UTP + NH4(+) + ATP = CTP + ADP + phosphate + 2 H(+). Its pathway is pyrimidine metabolism; CTP biosynthesis via de novo pathway; CTP from UDP: step 2/2. Its activity is regulated as follows. Allosterically activated by GTP, when glutamine is the substrate; GTP has no effect on the reaction when ammonia is the substrate. The allosteric effector GTP functions by stabilizing the protein conformation that binds the tetrahedral intermediate(s) formed during glutamine hydrolysis. Inhibited by the product CTP, via allosteric rather than competitive inhibition. Functionally, catalyzes the ATP-dependent amination of UTP to CTP with either L-glutamine or ammonia as the source of nitrogen. Regulates intracellular CTP levels through interactions with the four ribonucleotide triphosphates. In Bdellovibrio bacteriovorus (strain ATCC 15356 / DSM 50701 / NCIMB 9529 / HD100), this protein is CTP synthase.